We begin with the raw amino-acid sequence, 97 residues long: Ferredoxin-3 (97 aa).

4Fe-4S ferredoxin-type domains lie at 18-47 and 65-95; these read FAES…LKAL and KVMV…HNPL. Positions 27, 30, 33, 37, 75, 78, 81, and 85 each coordinate [4Fe-4S] cluster.

In terms of assembly, homodimer. It depends on [4Fe-4S] cluster as a cofactor.

Functionally, ferredoxins are iron-sulfur proteins that transfer electrons in a wide variety of metabolic reactions. In Nostoc sp. (strain PCC 7120 / SAG 25.82 / UTEX 2576), this protein is Ferredoxin-3 (fdxB).